Here is a 326-residue protein sequence, read N- to C-terminus: Aldo-keto reductase family 1 member D1 (326 aa).

NADP(+)-binding positions include 22–26 and D52; that span reads GLGTY. Y26 is a substrate binding site. The substrate site is built by Y57, W88, E119, and Y131. The active-site Proton donor is Y57. NADP(+) is bound by residues 168–169, Q192, and 219–224; these read SN and YSPLGT. W230 contacts substrate. 273 to 283 contributes to the NADP(+) binding site; that stretch reads KSTTPERIKEN.

This sequence belongs to the aldo/keto reductase family. The N-terminus is blocked.

It localises to the cytoplasm. It catalyses the reaction 5beta-cholestan-3-one + NADP(+) = cholest-4-en-3-one + NADPH + H(+). It carries out the reaction 4,5beta-dihydrocortisone + NADP(+) = cortisone + NADPH + H(+). The catalysed reaction is cortisol + NADPH + H(+) = 5beta-dihydrocortisol + NADP(+). The enzyme catalyses corticosterone + NADPH + H(+) = 5beta-dihydrocorticosterone + NADP(+). It catalyses the reaction 7alpha,12alpha-dihydroxycholest-4-en-3-one + NADPH + H(+) = 7alpha,12alpha-dihydroxy-5beta-cholestan-3-one + NADP(+). It carries out the reaction 7alpha-hydroxycholest-4-en-3-one + NADPH + H(+) = 7alpha-hydroxy-5beta-cholestan-3-one + NADP(+). The catalysed reaction is epitestosterone + NADPH + H(+) = 5beta-dihydroepitestosterone + NADP(+). The enzyme catalyses androst-4-ene-3,17-dione + NADPH + H(+) = 5beta-androstane-3,17-dione + NADP(+). It catalyses the reaction progesterone + NADPH + H(+) = 5beta-pregnan-3,20-dione + NADP(+). It carries out the reaction 21-hydroxyprogesterone + NADPH + H(+) = 5beta-dihydrodeoxycorticosterone + NADP(+). The catalysed reaction is aldosterone + NADPH + H(+) = 5beta-dihydroaldosterone + NADP(+). The enzyme catalyses 17beta-hydroxyandrosta-1,4-dien-3-one + NADPH + H(+) = 17beta-hydroxy-5beta-androst-1-en-3-one + NADP(+). It catalyses the reaction 17beta-hydroxyestr-4-en-3-one + NADPH + H(+) = 17beta-hydroxy-5beta-estran-3-one + NADP(+). It carries out the reaction 5beta-dihydrotestosterone + NADP(+) = testosterone + NADPH + H(+). The catalysed reaction is androst-4-ene-3,11,17-trione + NADPH + H(+) = 17beta-hydroxyandrost-4-ene-3,11-dione + NADP(+). Its activity is regulated as follows. Subject to inhibition by high substrate concentrations. Inhibited by testosterone concentrations above 10 uM. Inhibited by the primary and secondary bile acids chenodeoxycholic acid and ursodeoxycholic acid. In terms of biological role, catalyzes the stereospecific NADPH-dependent reduction of the C4-C5 double bond of bile acid intermediates and steroid hormones carrying a delta(4)-3-one structure to yield an A/B cis-ring junction. This cis-configuration is crucial for bile acid biosynthesis and plays important roles in steroid metabolism. Capable of reducing a broad range of delta-(4)-3-ketosteroids from C18 (such as, 17beta-hydroxyestr-4-en-3-one) to C27 (such as, 7alpha-hydroxycholest-4-en-3-one). The chain is Aldo-keto reductase family 1 member D1 (Akr1d1) from Rattus norvegicus (Rat).